Here is a 265-residue protein sequence, read N- to C-terminus: Adenosylcobinamide-GDP ribazoletransferase (265 aa).

Helical transmembrane passes span 59-79, 113-133, 141-161, 183-203, and 206-226; these read LSWI…SVLI, IGTF…LLLV, WIFL…ALLL, LPPF…VYFL, and FQNQ…FVFY.

This sequence belongs to the CobS family. Mg(2+) serves as cofactor.

It localises to the cell inner membrane. It catalyses the reaction alpha-ribazole + adenosylcob(III)inamide-GDP = adenosylcob(III)alamin + GMP + H(+). It carries out the reaction alpha-ribazole 5'-phosphate + adenosylcob(III)inamide-GDP = adenosylcob(III)alamin 5'-phosphate + GMP + H(+). It functions in the pathway cofactor biosynthesis; adenosylcobalamin biosynthesis; adenosylcobalamin from cob(II)yrinate a,c-diamide: step 7/7. In terms of biological role, joins adenosylcobinamide-GDP and alpha-ribazole to generate adenosylcobalamin (Ado-cobalamin). Also synthesizes adenosylcobalamin 5'-phosphate from adenosylcobinamide-GDP and alpha-ribazole 5'-phosphate. This Leptospira interrogans serogroup Icterohaemorrhagiae serovar copenhageni (strain Fiocruz L1-130) protein is Adenosylcobinamide-GDP ribazoletransferase.